Here is a 163-residue protein sequence, read N- to C-terminus: HTH-type transcriptional regulator IscR (163 aa).

An HTH rrf2-type domain is found at 2-131 (RLTSKGRYAV…NNITLGELVN (130 aa)). The H-T-H motif DNA-binding region spans 28 to 51 (LADISERQGISLSYLEQLFSRLRK). [2Fe-2S] cluster is bound by residues Cys92, Cys98, and Cys104.

It depends on [2Fe-2S] cluster as a cofactor.

Functionally, regulates the transcription of several operons and genes involved in the biogenesis of Fe-S clusters and Fe-S-containing proteins. This Enterobacter sp. (strain 638) protein is HTH-type transcriptional regulator IscR.